A 436-amino-acid chain; its full sequence is 3-ketoacyl-CoA thiolase (436 aa).

Cys-99 serves as the catalytic Acyl-thioester intermediate. Residues His-392 and Cys-422 each act as proton acceptor in the active site.

The protein belongs to the thiolase-like superfamily. Thiolase family. As to quaternary structure, heterotetramer of two alpha chains (FadJ) and two beta chains (FadI).

The protein localises to the cytoplasm. The catalysed reaction is an acyl-CoA + acetyl-CoA = a 3-oxoacyl-CoA + CoA. It functions in the pathway lipid metabolism; fatty acid beta-oxidation. In terms of biological role, catalyzes the final step of fatty acid oxidation in which acetyl-CoA is released and the CoA ester of a fatty acid two carbons shorter is formed. The polypeptide is 3-ketoacyl-CoA thiolase (Salmonella dublin (strain CT_02021853)).